Consider the following 222-residue polypeptide: Phosphoglycolate phosphatase (222 aa).

Asp8 serves as the catalytic Nucleophile. Asp8 and Asp10 together coordinate Mg(2+). Position 150 (Lys150) interacts with substrate. Mg(2+) is bound by residues Asp173 and Asp177.

Belongs to the archaeal SPP-like hydrolase family. Mg(2+) is required as a cofactor.

The enzyme catalyses 2-phosphoglycolate + H2O = glycolate + phosphate. Functionally, catalyzes the dephosphorylation of 2-phosphoglycolate. The polypeptide is Phosphoglycolate phosphatase (Metallosphaera sedula (strain ATCC 51363 / DSM 5348 / JCM 9185 / NBRC 15509 / TH2)).